The sequence spans 467 residues: Fumarate hydratase class II (467 aa).

Residues 99–101 (SGT), 130–133 (HPND), 140–142 (SSN), and T188 each bind substrate. The active-site Proton donor/acceptor is H189. S319 is an active-site residue. Residues S320 and 325-327 (KVN) each bind substrate.

It belongs to the class-II fumarase/aspartase family. Fumarase subfamily. As to quaternary structure, homotetramer.

The protein localises to the cytoplasm. It catalyses the reaction (S)-malate = fumarate + H2O. It participates in carbohydrate metabolism; tricarboxylic acid cycle; (S)-malate from fumarate: step 1/1. Involved in the TCA cycle. Catalyzes the stereospecific interconversion of fumarate to L-malate. This chain is Fumarate hydratase class II, found in Thermosynechococcus vestitus (strain NIES-2133 / IAM M-273 / BP-1).